Consider the following 2052-residue polypeptide: Unconventional myosin-X (2052 aa).

Met-1 is subject to N-acetylmethionine. Residues 63 to 739 (EGVDDMATLT…LEQKLEKRQE (677 aa)) form the Myosin motor domain. ATP is bound by residues Asn-104, Tyr-113, 160–165 (GAGKTE), and Asn-215. Residues 619 to 641 (LHSLMATLSASNPFFVRCIKPNM) form an actin-binding region. IQ domains are found at residues 742–763 (VTRAAMVIRAHVLGYLARKQYK), 764–787 (KVLDCVVIIQKNYRAFLLRRRFLH), and 788–817 (LKKAAVVFQKQLRGQIARRVYRQLLAEKRA). The SAH stretch occupies residues 814-884 (EKRAEEEKRK…LSRELEKQKE (71 aa)). The interval 819–843 (EEKRKREEEEKRKREEEERERERER) is disordered. A coiled-coil region spans residues 885–935 (NKQVEEILRLEKEIEDLQRMKERQELSLTEASLQKLQQLRDEELRRLEDEA). Residues Ser-963 and Ser-966 each carry the phosphoserine modification. The tract at residues 964–1093 (VGSGCTGEQG…DYDQDDYEDG (130 aa)) is disordered. The segment covering 988 to 1003 (PEEEEVDEGFEADDDA) has biased composition (acidic residues). Residues 1040-1049 (VVPTSPSADS) are compositionally biased toward polar residues. Residues 1081–1092 (GDYDYDQDDYED) show a composition bias toward acidic residues. Phosphothreonine is present on Thr-1152. PH domains lie at 1206-1304 (EALK…QVHA) and 1386-1491 (EFIV…NVTD). The region spanning 1541–1689 (LPYGDINLNL…PSRDEIEALI (149 aa)) is the MyTH4 domain. The FERM domain occupies 1694 to 2038 (MTSTVHCHGG…AYISMIVKKR (345 aa)).

Belongs to the TRAFAC class myosin-kinesin ATPase superfamily. Myosin family. In terms of assembly, monomer, when in an inactive conformation in the cytosol. Homodimer in its active, membrane-bound conformation; antiparallel coiled coil-mediated dimer formation. Interacts with ECPAS. Interacts with NEO 1. Interacts with VASP. Interacts with DCC and ITGB5; the presence of DCC inhibits ITGB5 binding. Interacts with tubulin; ITGB5 or DCC binding inhibits tubulin binding. Interacts strongly with CALM3 and weakly with CALM, the CALM3 interaction is essential for function in filopodial extension and motility. Interacts with ITGB1, ITGB3 and ITGB5. As to expression, detected in kidney, testis, liver, kidney, cerebellum and brain cortex (at protein level).

The protein localises to the cytoplasm. It is found in the cytosol. It localises to the cell projection. The protein resides in the lamellipodium. Its subcellular location is the ruffle. The protein localises to the cytoskeleton. It is found in the filopodium tip. It localises to the cell cortex. The protein resides in the filopodium membrane. In terms of biological role, myosins are actin-based motor molecules with ATPase activity. Unconventional myosins serve in intracellular movements. MYO10 binds to actin filaments and actin bundles and functions as a plus end-directed motor. Moves with higher velocity and takes larger steps on actin bundles than on single actin filaments. The tail domain binds to membranous compartments containing phosphatidylinositol 3,4,5-trisphosphate, which are then moved relative to actin filaments. Regulates cell shape, cell spreading and cell adhesion. Stimulates the formation and elongation of filopodia. In hippocampal neurons it induces the formation of dendritic filopodia by trafficking the actin-remodeling protein VASP to the tips of filopodia, where it promotes actin elongation. Plays a role in formation of the podosome belt in osteoclasts. This Bos taurus (Bovine) protein is Unconventional myosin-X (MYO10).